The sequence spans 509 residues: Taxoid 14-beta-hydroxylase (509 aa).

The next 3 helical transmembrane spans lie at 20 to 40, 186 to 206, and 218 to 238; these read AILF…LLFL, SVVA…FFNI, and LLEI…GFAY. Cysteine 443 is a heme binding site.

It belongs to the cytochrome P450 family.

The protein localises to the microsome membrane. It carries out the reaction 10beta-hydroxytaxa-4(20),11-dien-5alpha-yl acetate + NADPH + O2 + H(+) = 10beta,14beta-dihydroxytaxa-4(20),11-dien-5alpha-yl acetate + NADP(+) + H2O. It participates in alkaloid biosynthesis; taxol biosynthesis. Functionally, catalyzes the conversion of 5-alpha-acetoxy-10beta-ol to 5-alpha-acetoxy-10beta,14beta-dihydroxy taxadiene. Also acts on taxa-4(20),11-dien-5-alpha-yl acetate. The chain is Taxoid 14-beta-hydroxylase from Taxus cuspidata (Japanese yew).